A 102-amino-acid polypeptide reads, in one-letter code: Small ribosomal subunit protein uS10 (102 aa).

Belongs to the universal ribosomal protein uS10 family. Part of the 30S ribosomal subunit.

In terms of biological role, involved in the binding of tRNA to the ribosomes. The polypeptide is Small ribosomal subunit protein uS10 (Leifsonia xyli subsp. xyli (strain CTCB07)).